A 99-amino-acid chain; its full sequence is Large ribosomal subunit protein uL23 (99 aa).

It belongs to the universal ribosomal protein uL23 family. In terms of assembly, part of the 50S ribosomal subunit. Contacts protein L29, and trigger factor when it is bound to the ribosome.

Functionally, one of the early assembly proteins it binds 23S rRNA. One of the proteins that surrounds the polypeptide exit tunnel on the outside of the ribosome. Forms the main docking site for trigger factor binding to the ribosome. This is Large ribosomal subunit protein uL23 from Ectopseudomonas mendocina (strain ymp) (Pseudomonas mendocina).